A 475-amino-acid chain; its full sequence is Ribulose bisphosphate carboxylase large chain (475 aa).

Positions 1–2 are excised as a propeptide; the sequence is MS. Pro3 is modified (N-acetylproline). N6,N6,N6-trimethyllysine is present on Lys14. 2 residues coordinate substrate: Asn123 and Thr173. The active-site Proton acceptor is Lys175. Substrate is bound at residue Lys177. Mg(2+) is bound by residues Lys201, Asp203, and Glu204. Lys201 carries the post-translational modification N6-carboxylysine. His294 (proton acceptor) is an active-site residue. Arg295, His327, and Ser379 together coordinate substrate.

It belongs to the RuBisCO large chain family. Type I subfamily. Heterohexadecamer of 8 large chains and 8 small chains; disulfide-linked. The disulfide link is formed within the large subunit homodimers. Requires Mg(2+) as cofactor. In terms of processing, the disulfide bond which can form in the large chain dimeric partners within the hexadecamer appears to be associated with oxidative stress and protein turnover.

It is found in the plastid. It localises to the chloroplast. It catalyses the reaction 2 (2R)-3-phosphoglycerate + 2 H(+) = D-ribulose 1,5-bisphosphate + CO2 + H2O. The enzyme catalyses D-ribulose 1,5-bisphosphate + O2 = 2-phosphoglycolate + (2R)-3-phosphoglycerate + 2 H(+). Functionally, ruBisCO catalyzes two reactions: the carboxylation of D-ribulose 1,5-bisphosphate, the primary event in carbon dioxide fixation, as well as the oxidative fragmentation of the pentose substrate in the photorespiration process. Both reactions occur simultaneously and in competition at the same active site. The polypeptide is Ribulose bisphosphate carboxylase large chain (Pinus radiata (Monterey pine)).